A 767-amino-acid chain; its full sequence is U3 small nucleolar RNA-associated protein 14 homolog A (767 aa).

The tract at residues 23 to 49 (TSNYPLSASEDEGDSDGERKHQKLLEA) is disordered. 6 positions are modified to phosphoserine: serine 29, serine 31, serine 37, serine 52, serine 77, and serine 81. Lysine 122 participates in a covalent cross-link: Glycyl lysine isopeptide (Lys-Gly) (interchain with G-Cter in SUMO2). Threonine 205 carries the post-translational modification Phosphothreonine. Positions 317-346 (LEARQAMQEQLAKNKELTQKLQVVSESEEE) form a coiled coil. The tract at residues 338–554 (QVVSESEEEG…SKGKNKKEQM (217 aa)) is disordered. Residues 342–355 (ESEEEGGADEEEAL) show a composition bias toward acidic residues. A compositionally biased stretch (basic and acidic residues) spans 398–433 (AAHEFPENEENDKPVAEEDELLKELEKRRSLRKRSE). Arginine 431 is modified (citrulline). A Glycyl lysine isopeptide (Lys-Gly) (interchain with G-Cter in SUMO2) cross-link involves residue lysine 447. A Phosphoserine modification is found at serine 451. Over residues 486–498 (VWEEEPAPEEDEP) the composition is skewed to acidic residues. Basic and acidic residues predominate over residues 503–538 (RPERMRTLEELEELGKEDSLPNKERPRPSVEGEQVR). A Glycyl lysine isopeptide (Lys-Gly) (interchain with G-Cter in SUMO2) cross-link involves residue lysine 518. Arginine 586 is subject to Citrulline. The disordered stretch occupies residues 730-767 (TAEDVDCRSSPRSDVPVMQSNPKQHSKHQKQRKKSSIG). Residues 753–767 (QHSKHQKQRKKSSIG) are compositionally biased toward basic residues.

This sequence belongs to the UTP14 family. Interacts with DHX37. In terms of processing, citrullinated by PADI4. In terms of tissue distribution, ubiquitously expressed.

Its subcellular location is the nucleus. It localises to the nucleolus. May be required for ribosome biogenesis. The protein is U3 small nucleolar RNA-associated protein 14 homolog A (Utp14a) of Mus musculus (Mouse).